The following is a 351-amino-acid chain: L-threonine 3-dehydrogenase (351 aa).

Zn(2+) is bound at residue Cys-39. Active-site charge relay system residues include Thr-41 and His-44. Residues His-64, Glu-65, Cys-94, Cys-97, Cys-100, and Cys-108 each contribute to the Zn(2+) site. NAD(+)-binding positions include Ile-176, Asp-196, Arg-201, 271–273, and 295–296; these read LGI and IY.

Belongs to the zinc-containing alcohol dehydrogenase family. As to quaternary structure, homotetramer. Zn(2+) serves as cofactor.

The protein resides in the cytoplasm. The enzyme catalyses L-threonine + NAD(+) = (2S)-2-amino-3-oxobutanoate + NADH + H(+). It participates in amino-acid degradation; L-threonine degradation via oxydo-reductase pathway; glycine from L-threonine: step 1/2. Catalyzes the NAD(+)-dependent oxidation of L-threonine to 2-amino-3-ketobutyrate. This Francisella tularensis subsp. tularensis (strain SCHU S4 / Schu 4) protein is L-threonine 3-dehydrogenase.